Here is a 1014-residue protein sequence, read N- to C-terminus: Klotho (1014 aa).

Residues 1-34 (MPARAPPRRLPRLLLLRLLSLHLLLLTLRARCLS) form the signal peptide. The Extracellular portion of the chain corresponds to 35–983 (AEPGQGAQTW…GCGFFQTRKS (949 aa)). Glycosyl hydrolase-1 regions lie at residues 59–508 (LHDT…NNGF) and 517–955 (LEGT…NNGF). 6 N-linked (GlcNAc...) asparagine glycosylation sites follow: N161, N285, N346, N609, N614, and N696. The helical transmembrane segment at 984 to 1004 (LLAFISFLVFAFVTSLALIYY) threads the bilayer. The Cytoplasmic portion of the chain corresponds to 1005–1014 (YSKKGRRRYK).

It belongs to the glycosyl hydrolase 1 family. Klotho subfamily. In terms of assembly, homodimer. Interacts with FGF23 and FGFR1. Post-translationally, N-glycosylated. As to expression, present in cortical renal tubules and the parathyroid (at protein level). Strongly expressed in kidney. Expressed at low levels in brain, lung, intestine and ovaries.

Its subcellular location is the cell membrane. The protein resides in the apical cell membrane. It localises to the secreted. The catalysed reaction is a beta-D-glucuronoside + H2O = D-glucuronate + an alcohol. May have weak glycosidase activity towards glucuronylated steroids. However, it lacks essential active site Glu residues at positions 241 and 874, suggesting it may be inactive as a glycosidase in vivo. May be involved in the regulation of calcium and phosphorus homeostasis by inhibiting the synthesis of active vitamin D. Essential factor for the specific interaction between FGF23 and FGFR1. In terms of biological role, the Klotho peptide generated by cleavage of the membrane-bound isoform may be an anti-aging circulating hormone which would extend life span by inhibiting insulin/IGF1 signaling. The sequence is that of Klotho (Kl) from Rattus norvegicus (Rat).